The sequence spans 454 residues: V-type ATP synthase subunit I 2 (454 aa).

Residues 101 to 121 (EREGDAPSVPRGKSSVAHDSA) form a disordered region. Transmembrane regions (helical) follow at residues 254–274 (LLFG…VLGL), 293–313 (VFLS…EFFA), 351–371 (MAFF…GLII), and 424–444 (ACLS…SVCV).

This sequence belongs to the V-ATPase 116 kDa subunit family.

The protein resides in the cell membrane. In terms of biological role, produces ATP from ADP in the presence of a proton gradient across the membrane. This chain is V-type ATP synthase subunit I 2 (atpI2), found in Treponema pallidum (strain Nichols).